Consider the following 671-residue polypeptide: DNA ligase (671 aa).

Residues 32 to 36, 81 to 82, and E113 contribute to the NAD(+) site; these read DAEYD and SL. The active-site N6-AMP-lysine intermediate is the K115. Positions 136, 173, 290, and 314 each coordinate NAD(+). Residues C408, C411, C426, and C432 each coordinate Zn(2+). One can recognise a BRCT domain in the interval 593 to 671; it reads EIDSPFAGKT…EAEMLRLLGS (79 aa).

Belongs to the NAD-dependent DNA ligase family. LigA subfamily. Mg(2+) is required as a cofactor. It depends on Mn(2+) as a cofactor.

It carries out the reaction NAD(+) + (deoxyribonucleotide)n-3'-hydroxyl + 5'-phospho-(deoxyribonucleotide)m = (deoxyribonucleotide)n+m + AMP + beta-nicotinamide D-nucleotide.. DNA ligase that catalyzes the formation of phosphodiester linkages between 5'-phosphoryl and 3'-hydroxyl groups in double-stranded DNA using NAD as a coenzyme and as the energy source for the reaction. It is essential for DNA replication and repair of damaged DNA. The polypeptide is DNA ligase (Shigella boydii serotype 4 (strain Sb227)).